The chain runs to 250 residues: Complement factor B-like protease (250 aa).

Sushi domains follow at residues 3 to 73, 74 to 133, and 136 to 193; these read TRCD…KCRA, VWCP…VCDD, and GDCP…QCRA. 6 cysteine pairs are disulfide-bonded: Cys-5–Cys-44, Cys-30–Cys-71, Cys-76–Cys-118, Cys-104–Cys-131, Cys-138–Cys-178, and Cys-164–Cys-191. N-linked (GlcNAc...) asparagine glycosylation is present at Asn-115. Asn-221 carries an N-linked (GlcNAc...) asparagine glycan.

It belongs to the peptidase S1 family. In terms of tissue distribution, plasma.

The protein localises to the secreted. Its function is as follows. Required in both the classical and alternate pathways of the complement system. This Gallus gallus (Chicken) protein is Complement factor B-like protease.